Reading from the N-terminus, the 130-residue chain is Putative pre-16S rRNA nuclease (130 aa).

The protein belongs to the YqgF nuclease family.

Its subcellular location is the cytoplasm. Its function is as follows. Could be a nuclease involved in processing of the 5'-end of pre-16S rRNA. The sequence is that of Putative pre-16S rRNA nuclease from Sulfurimonas denitrificans (strain ATCC 33889 / DSM 1251) (Thiomicrospira denitrificans (strain ATCC 33889 / DSM 1251)).